The primary structure comprises 334 residues: S-adenosylmethionine:tRNA ribosyltransferase-isomerase (334 aa).

This sequence belongs to the QueA family. Monomer.

It is found in the cytoplasm. It catalyses the reaction 7-aminomethyl-7-carbaguanosine(34) in tRNA + S-adenosyl-L-methionine = epoxyqueuosine(34) in tRNA + adenine + L-methionine + 2 H(+). It functions in the pathway tRNA modification; tRNA-queuosine biosynthesis. Functionally, transfers and isomerizes the ribose moiety from AdoMet to the 7-aminomethyl group of 7-deazaguanine (preQ1-tRNA) to give epoxyqueuosine (oQ-tRNA). The sequence is that of S-adenosylmethionine:tRNA ribosyltransferase-isomerase from Aquifex aeolicus (strain VF5).